We begin with the raw amino-acid sequence, 273 residues long: MRQVAIYGKGGIGKSTTTQNLTSGLHAMGKTIMVVGCDPKADSTRLLLGGLAQKSVLDTLREEGEDVELDSILKEGYGGIRCVESGGPEPGVGCAGRGIITSINMLEQLGAYTDDLDYVFYDVLGDVVCGGFAMPIREGKAQEIYIVASGEMMALYAANNISKGIQKYAKSGGVRLGGIICNSRKVANEYELLDAFAKELGSQLIHFVPRSPMVTKAEINKQTVIEFDPTCEQAEEYRELARKVDANELFVIPKPMTQERLEEILMEYGLMDL.

8 to 15 (GKGGIGKS) is an ATP binding site. Cysteine 94 contacts [4Fe-4S] cluster. Position 97 is an ADP-ribosylarginine; by dinitrogenase reductase ADP-ribosyltransferase (arginine 97). Residue cysteine 129 participates in [4Fe-4S] cluster binding.

It belongs to the NifH/BchL/ChlL family. Homodimer. It depends on [4Fe-4S] cluster as a cofactor. The reversible ADP-ribosylation of Arg-97 inactivates the nitrogenase reductase and regulates nitrogenase activity.

It catalyses the reaction N2 + 8 reduced [2Fe-2S]-[ferredoxin] + 16 ATP + 16 H2O = H2 + 8 oxidized [2Fe-2S]-[ferredoxin] + 2 NH4(+) + 16 ADP + 16 phosphate + 6 H(+). In terms of biological role, the key enzymatic reactions in nitrogen fixation are catalyzed by the nitrogenase complex, which has 2 components: the iron protein and the molybdenum-iron protein. The protein is Nitrogenase iron protein 5 (nifH5) of Clostridium pasteurianum.